We begin with the raw amino-acid sequence, 597 residues long: Gamma-terpinene synthase, chloroplastic (597 aa).

A chloroplast-targeting transit peptide spans 1–47; the sequence is MATLSMQVSILSKQVKNLNSFGMRASKLPMVARRVDVSTTRLRPICS. The Mn(2+) site is built by Asp350 and Asp354. Residues 350-354 carry the DDXXD motif motif; the sequence is DDVYD. Homodimerization stretches follow at residues 356-362 and 428-465; these read YGTLDEL and EAKWYYAGYTPTLAEYLENAKVSISSPTIISQVYFTLP. Mn(2+) contacts are provided by Asp494 and Glu502.

This sequence belongs to the terpene synthase family. In terms of assembly, homodimer. It depends on Mn(2+) as a cofactor. The cofactor is Mg(2+).

The protein localises to the plastid. The protein resides in the chloroplast. The catalysed reaction is (2E)-geranyl diphosphate = gamma-terpinene + diphosphate. The protein operates within secondary metabolite biosynthesis; terpenoid biosynthesis. Functionally, involved in the biosynthesis of phenolic monoterpenes natural products thymol and carvacrol which have a broad range of biological activities acting as antimicrobial compounds, insecticides, antioxidants and pharmaceutical agents. Monoterpene synthase which catalyzes the conversion of geranyl diphosphate (GPP) to gamma-terpinene and minor amounts of other monoterpenes (e.g. alpha-thujene, alpha-terpinene, myrcene, sabinene, (+)-R-limonene, alpha-pinene and alpha-phellandrene). In Thymus caespititius (Cretan thyme), this protein is Gamma-terpinene synthase, chloroplastic.